We begin with the raw amino-acid sequence, 87 residues long: NAD(P)H-quinone oxidoreductase subunit O (87 aa).

The span at 1–10 (MSEQTGKVDD) shows a compositional bias: basic and acidic residues. Positions 1–23 (MSEQTGKVDDSQSPPKVQKKLRK) are disordered.

Belongs to the complex I NdhO subunit family. In terms of assembly, NDH-1 can be composed of about 15 different subunits; different subcomplexes with different compositions have been identified which probably have different functions.

Its subcellular location is the cellular thylakoid membrane. The catalysed reaction is a plastoquinone + NADH + (n+1) H(+)(in) = a plastoquinol + NAD(+) + n H(+)(out). The enzyme catalyses a plastoquinone + NADPH + (n+1) H(+)(in) = a plastoquinol + NADP(+) + n H(+)(out). In terms of biological role, NDH-1 shuttles electrons from an unknown electron donor, via FMN and iron-sulfur (Fe-S) centers, to quinones in the respiratory and/or the photosynthetic chain. The immediate electron acceptor for the enzyme in this species is believed to be plastoquinone. Couples the redox reaction to proton translocation, and thus conserves the redox energy in a proton gradient. Cyanobacterial NDH-1 also plays a role in inorganic carbon-concentration. The polypeptide is NAD(P)H-quinone oxidoreductase subunit O (Prochlorococcus marinus (strain NATL2A)).